We begin with the raw amino-acid sequence, 331 residues long: 6-phosphogluconolactonase (331 aa).

K287 carries the post-translational modification N6-acetyllysine.

This sequence belongs to the cycloisomerase 2 family.

It catalyses the reaction 6-phospho-D-glucono-1,5-lactone + H2O = 6-phospho-D-gluconate + H(+). Its pathway is carbohydrate degradation; pentose phosphate pathway; D-ribulose 5-phosphate from D-glucose 6-phosphate (oxidative stage): step 2/3. Functionally, catalyzes the hydrolysis of 6-phosphogluconolactone to 6-phosphogluconate. The protein is 6-phosphogluconolactonase of Shigella boydii serotype 18 (strain CDC 3083-94 / BS512).